A 736-amino-acid chain; its full sequence is Phosphoribosylformylglycinamidine synthase subunit PurL (736 aa).

His49 is a catalytic residue. Tyr52 and Lys91 together coordinate ATP. Glu93 serves as a coordination point for Mg(2+). Residues 94–97 (SHNH) and Arg116 each bind substrate. His95 functions as the Proton acceptor in the catalytic mechanism. Asp117 provides a ligand contact to Mg(2+). Gln240 contacts substrate. Asp268 contributes to the Mg(2+) binding site. 312-314 (ESQ) lines the substrate pocket. ATP contacts are provided by Asp493 and Gly530. Asn531 contacts Mg(2+). Position 533 (Ser533) interacts with substrate.

The protein belongs to the FGAMS family. In terms of assembly, monomer. Part of the FGAM synthase complex composed of 1 PurL, 1 PurQ and 2 PurS subunits.

The protein localises to the cytoplasm. The enzyme catalyses N(2)-formyl-N(1)-(5-phospho-beta-D-ribosyl)glycinamide + L-glutamine + ATP + H2O = 2-formamido-N(1)-(5-O-phospho-beta-D-ribosyl)acetamidine + L-glutamate + ADP + phosphate + H(+). It functions in the pathway purine metabolism; IMP biosynthesis via de novo pathway; 5-amino-1-(5-phospho-D-ribosyl)imidazole from N(2)-formyl-N(1)-(5-phospho-D-ribosyl)glycinamide: step 1/2. Functionally, part of the phosphoribosylformylglycinamidine synthase complex involved in the purines biosynthetic pathway. Catalyzes the ATP-dependent conversion of formylglycinamide ribonucleotide (FGAR) and glutamine to yield formylglycinamidine ribonucleotide (FGAM) and glutamate. The FGAM synthase complex is composed of three subunits. PurQ produces an ammonia molecule by converting glutamine to glutamate. PurL transfers the ammonia molecule to FGAR to form FGAM in an ATP-dependent manner. PurS interacts with PurQ and PurL and is thought to assist in the transfer of the ammonia molecule from PurQ to PurL. The protein is Phosphoribosylformylglycinamidine synthase subunit PurL of Rhodopseudomonas palustris (strain HaA2).